We begin with the raw amino-acid sequence, 237 residues long: MIYAQILAGGKGTRMGNVSMPKQFLPLNGKPIIVHTVEKFILNTRFDKILISSPKEWMNHAEDNIKKYISDDRIVVIEGGEDRNETIMNGIRYVEKTFGLNDEDIIVTHDAVRPFLTHRIIEENIDAAIETGAVDTVIEALDTIVESSNHEFITDIPVRDQMYQGQTPQSFNMKKVYNHYQNLSAEKKQILTDACKICLLAGDQVKLVKGEIFNIKITTPYDLKVANAIIQERIAND.

CTP-binding positions include 7-10 and 80-86; these read LAGG and GEDRNET.

This sequence belongs to the IspD/TarI cytidylyltransferase family. TarI subfamily.

It catalyses the reaction D-ribitol 5-phosphate + CTP + H(+) = CDP-L-ribitol + diphosphate. Its pathway is cell wall biogenesis; poly(ribitol phosphate) teichoic acid biosynthesis. Functionally, catalyzes the transfer of the cytidylyl group of CTP to D-ribitol 5-phosphate. This is Ribitol-5-phosphate cytidylyltransferase from Listeria innocua serovar 6a (strain ATCC BAA-680 / CLIP 11262).